The sequence spans 260 residues: Neurotrophin-3 (260 aa).

Positions 1–18 (MSILFYVMFLPYLCGIHA) are cleaved as a signal peptide. Positions 19 to 141 (TNMDKRNLPE…VNNRTSRRKR (123 aa)) are excised as a propeptide. N-linked (GlcNAc...) asparagine glycosylation is present at Asn-134. 3 disulfides stabilise this stretch: Cys-155–Cys-220, Cys-198–Cys-249, and Cys-208–Cys-251.

The protein belongs to the NGF-beta family.

It localises to the secreted. Seems to promote the survival of visceral and proprioceptive sensory neurons. In Xenopus laevis (African clawed frog), this protein is Neurotrophin-3 (ntf3).